Consider the following 332-residue polypeptide: Glycerol-3-phosphate dehydrogenase [NAD(P)+] (332 aa).

NADPH is bound by residues Ser11, Phe12, Arg32, and Lys106. Sn-glycerol 3-phosphate-binding residues include Lys106, Gly134, and Ser136. Ala138 lines the NADPH pocket. Residues Lys189, Asp242, Ser252, Arg253, and Asn254 each coordinate sn-glycerol 3-phosphate. The active-site Proton acceptor is the Lys189. NADPH is bound at residue Arg253. Val277 and Glu279 together coordinate NADPH.

Belongs to the NAD-dependent glycerol-3-phosphate dehydrogenase family.

It localises to the cytoplasm. The enzyme catalyses sn-glycerol 3-phosphate + NAD(+) = dihydroxyacetone phosphate + NADH + H(+). The catalysed reaction is sn-glycerol 3-phosphate + NADP(+) = dihydroxyacetone phosphate + NADPH + H(+). Its pathway is membrane lipid metabolism; glycerophospholipid metabolism. In terms of biological role, catalyzes the reduction of the glycolytic intermediate dihydroxyacetone phosphate (DHAP) to sn-glycerol 3-phosphate (G3P), the key precursor for phospholipid synthesis. The chain is Glycerol-3-phosphate dehydrogenase [NAD(P)+] from Clostridium acetobutylicum (strain ATCC 824 / DSM 792 / JCM 1419 / IAM 19013 / LMG 5710 / NBRC 13948 / NRRL B-527 / VKM B-1787 / 2291 / W).